A 368-amino-acid chain; its full sequence is Alanine racemase (368 aa).

The active-site Proton acceptor; specific for D-alanine is lysine 40. At lysine 40 the chain carries N6-(pyridoxal phosphate)lysine. Arginine 134 serves as a coordination point for substrate. Residue tyrosine 263 is the Proton acceptor; specific for L-alanine of the active site. Methionine 310 contacts substrate.

Belongs to the alanine racemase family. Requires pyridoxal 5'-phosphate as cofactor.

It catalyses the reaction L-alanine = D-alanine. It participates in amino-acid biosynthesis; D-alanine biosynthesis; D-alanine from L-alanine: step 1/1. Functionally, catalyzes the interconversion of L-alanine and D-alanine. May also act on other amino acids. In Listeria monocytogenes serotype 4b (strain CLIP80459), this protein is Alanine racemase (alr).